Consider the following 94-residue polypeptide: Large ribosomal subunit protein uL23 (94 aa).

The protein belongs to the universal ribosomal protein uL23 family. Part of the 50S ribosomal subunit. Contacts protein L29, and trigger factor when it is bound to the ribosome.

One of the early assembly proteins it binds 23S rRNA. One of the proteins that surrounds the polypeptide exit tunnel on the outside of the ribosome. Forms the main docking site for trigger factor binding to the ribosome. This Phytoplasma australiense protein is Large ribosomal subunit protein uL23.